Here is a 42-residue protein sequence, read N- to C-terminus: Tachystatin-B1 (42 aa).

3 cysteine pairs are disulfide-bonded: cysteine 4–cysteine 20, cysteine 11–cysteine 25, and cysteine 19–cysteine 37.

As to expression, granular hemocytes, small secretory granules.

The protein resides in the secreted. Exhibits stronger antimicrobial activity against the Gram-positive bacteria (S.aureus (IC(50) is 7.4 ug/ml)) and fungi (C.albicans (IC(50) is 3.0 ug/ml) and P.pastoris (IC(50) is 0.1 ug/ml)) than Gram-negative bacteria (E.coli no inhibition at 100 ug/ml). Binds to chitin (4.3 uM are required to obtain 50% of binding). Does not cause hemolysis on sheep erythrocytes. Has no blocking activity on the P-type calcium channel. This Tachypleus tridentatus (Japanese horseshoe crab) protein is Tachystatin-B1.